A 267-amino-acid chain; its full sequence is 4-hydroxy-tetrahydrodipicolinate reductase (267 aa).

NAD(+) contacts are provided by residues 8–13 (GAAGRM) and Asp34. Position 35 (Arg35) interacts with NADP(+). NAD(+)-binding positions include 98–100 (GTT) and 122–125 (AANF). The active-site Proton donor/acceptor is the His155. Residue His156 coordinates (S)-2,3,4,5-tetrahydrodipicolinate. Lys159 acts as the Proton donor in catalysis. 165 to 166 (GT) is a binding site for (S)-2,3,4,5-tetrahydrodipicolinate.

This sequence belongs to the DapB family.

The protein resides in the cytoplasm. It carries out the reaction (S)-2,3,4,5-tetrahydrodipicolinate + NAD(+) + H2O = (2S,4S)-4-hydroxy-2,3,4,5-tetrahydrodipicolinate + NADH + H(+). It catalyses the reaction (S)-2,3,4,5-tetrahydrodipicolinate + NADP(+) + H2O = (2S,4S)-4-hydroxy-2,3,4,5-tetrahydrodipicolinate + NADPH + H(+). It participates in amino-acid biosynthesis; L-lysine biosynthesis via DAP pathway; (S)-tetrahydrodipicolinate from L-aspartate: step 4/4. Catalyzes the conversion of 4-hydroxy-tetrahydrodipicolinate (HTPA) to tetrahydrodipicolinate. The sequence is that of 4-hydroxy-tetrahydrodipicolinate reductase from Pseudomonas putida (strain ATCC 700007 / DSM 6899 / JCM 31910 / BCRC 17059 / LMG 24140 / F1).